The primary structure comprises 363 residues: Chorismate synthase (363 aa).

The NADP(+) site is built by Arg-48 and Arg-54. FMN contacts are provided by residues 125–127 (RSS), 237–238 (NA), Gly-277, 292–296 (KPTSS), and Arg-318.

Belongs to the chorismate synthase family. In terms of assembly, homotetramer. It depends on FMNH2 as a cofactor.

It catalyses the reaction 5-O-(1-carboxyvinyl)-3-phosphoshikimate = chorismate + phosphate. The protein operates within metabolic intermediate biosynthesis; chorismate biosynthesis; chorismate from D-erythrose 4-phosphate and phosphoenolpyruvate: step 7/7. Its function is as follows. Catalyzes the anti-1,4-elimination of the C-3 phosphate and the C-6 proR hydrogen from 5-enolpyruvylshikimate-3-phosphate (EPSP) to yield chorismate, which is the branch point compound that serves as the starting substrate for the three terminal pathways of aromatic amino acid biosynthesis. This reaction introduces a second double bond into the aromatic ring system. This Pseudomonas syringae pv. syringae (strain B728a) protein is Chorismate synthase.